The following is a 1064-amino-acid chain: Serine protease inhibitor Kazal-type 5 (1064 aa).

Residues Met1–Ser22 form the signal peptide. The Kazal-like 1; atypical domain maps to Glu28 to Cys66. Intrachain disulfides connect Cys30–Cys66, Cys44–Cys63, Cys97–Cys133, Cys111–Cys130, Cys119–Cys151, Cys161–Cys197, Cys175–Cys194, Cys225–Cys261, Cys239–Cys258, Cys297–Cys333, Cys311–Cys330, Cys367–Cys403, Cys381–Cys400, Cys437–Cys473, Cys451–Cys470, Cys496–Cys532, Cys510–Cys529, Cys567–Cys603, Cys581–Cys600, Cys632–Cys668, and Cys646–Cys665. Kazal-like domains lie at Ala91–Ser153, Asn155–Ile216, Asn219–Glu285, Arg291–Arg352, Thr361–Asn423, Ala431–Arg489, Glu490–Gly551, Glu561–Lys622, Glu626–Arg688, Gly701–Tyr757, Glu768–Ser830, Asn843–Ser905, Asn910–Ser971, and Ser987–Glu1048. Over residues Asn676–Arg688 the composition is skewed to basic and acidic residues. Residues Asn676–Asp705 are disordered. 6 cysteine pairs are disulfide-bonded: Cys707-Cys743, Cys721-Cys740, Cys774-Cys810, Cys788-Cys807, Cys849-Cys885, and Cys863-Cys882. Positions Ala751 to Asp775 are disordered. The interval Ala818–Cys849 is disordered. The segment covering Glu895 to Ser905 has biased composition (basic and acidic residues). The interval Glu895–Glu915 is disordered. 2 cysteine pairs are disulfide-bonded: Cys916/Cys952 and Cys930/Cys949. The segment covering Gln967–Gln977 has biased composition (basic and acidic residues). Residues Gln967 to Ser987 form a disordered region. 3 cysteine pairs are disulfide-bonded: Cys993/Cys1028, Cys1006/Cys1025, and Cys1014/Cys1046. A disordered region spans residues Arg1041 to Glu1064.

Post-translationally, proteolytically processed by furin in individual domains (D1, D5, D6, D8 through D11, and D9 through D15) exhibiting various inhibitory potentials for multiple proteases. Highly expressed in the thymus and stratum corneum. Also found in the oral mucosa, parathyroid gland, Bartholin's glands, tonsils, and vaginal epithelium. Very low levels are detected in lung, kidney, and prostate.

The protein resides in the secreted. In terms of biological role, serine protease inhibitor, probably important for the anti-inflammatory and/or antimicrobial protection of mucous epithelia. Contribute to the integrity and protective barrier function of the skin by regulating the activity of defense-activating and desquamation-involved proteases. Inhibits KLK5, it's major target, in a pH-dependent manner. Inhibits KLK7, KLK14 CASP14, and trypsin. In Homo sapiens (Human), this protein is Serine protease inhibitor Kazal-type 5 (SPINK5).